Consider the following 104-residue polypeptide: N(4)-acetylcytidine amidohydrolase (104 aa).

An ASCH domain is found at Ile-6–Leu-102. Lys-21 acts as the Proton acceptor in catalysis. Thr-24 (nucleophile) is an active-site residue. The active-site Proton donor is the Glu-74.

Belongs to the N(4)-acetylcytidine amidohydrolase family.

The enzyme catalyses N(4)-acetylcytidine + H2O = cytidine + acetate + H(+). The catalysed reaction is N(4)-acetyl-2'-deoxycytidine + H2O = 2'-deoxycytidine + acetate + H(+). It catalyses the reaction N(4)-acetylcytosine + H2O = cytosine + acetate + H(+). Functionally, catalyzes the hydrolysis of N(4)-acetylcytidine (ac4C). In Haemophilus influenzae (strain PittEE), this protein is N(4)-acetylcytidine amidohydrolase.